A 1021-amino-acid polypeptide reads, in one-letter code: PDZ domain-containing protein 7 (1021 aa).

PDZ domains lie at 86–156 (AVRV…LTSS) and 210–279 (IVHL…EVLK). Positions 324 to 344 (SSSSVSSYASSAPCSSGSLPS) are enriched in low complexity. 3 disordered regions span residues 324–345 (SSSS…LPSD), 431–495 (ITRS…DSRS), and 724–814 (RRGA…HRPR). Residues 729-744 (APPPQPPPVAPRPPRP) show a composition bias toward pro residues. Over residues 758–767 (QQNQSQTPAQ) the composition is skewed to polar residues. A compositionally biased stretch (basic residues) spans 772–794 (SRSRSRSRSHSRGQGKSPGRRRS). Low complexity predominate over residues 799 to 808 (PIATAATANG). Residues 858 to 930 (TITLSKMKQS…QRAVDTIRRA (73 aa)) enclose the PDZ 3 domain. A disordered region spans residues 992–1021 (QLQQSLSSALKVPQSIPKLSPILKDPHDPS).

In terms of assembly, homodimerizes (via PDZ2 domain). Component of USH2 complex, composed of ADGRV1, PDZD7, USH2A and WHRN. Interacts (via PDZ domains) with WHRN; the interaction is direct. Interacts with USH1G. Interacts with ADGRV1 (via the cytoplasmic region). Interacts with USH2A (via the cytoplasmic region). Interacts with MYO7A (via MyTH4-FERM domains). In terms of tissue distribution, isoform 1 is expressed in developing and adult cochlea but not retina. Isoform 2 is expressed in developing and adult cochlea and retina. Isoform 3 is expressed in adult cochlea and retina. Isoform 4 is expressed in retina and developing cochlea but not adult cochlea. Isoform 5 is expressed in adult cochlea but not in developing cochlea or retina.

Its subcellular location is the cell projection. It is found in the cilium. The protein resides in the nucleus. The protein localises to the stereocilium. In terms of biological role, in cochlear developing hair cells, essential in organizing the USH2 complex at stereocilia ankle links. Blocks inhibition of adenylate cyclase activity mediated by ADGRV1. This chain is PDZ domain-containing protein 7, found in Mus musculus (Mouse).